The following is a 109-amino-acid chain: Oncomodulin (109 aa).

Position 2 is an N-acetylserine (serine 2). EF-hand domains lie at 39-74 (MSAS…FQSD) and 78-109 (LTES…MVHS). Aspartate 52, aspartate 54, serine 56, tyrosine 58, glutamate 63, aspartate 91, aspartate 93, aspartate 95, lysine 97, and glutamate 102 together coordinate Ca(2+).

The protein belongs to the parvalbumin family. As to expression, found in tumor tissues and not detected in normal tissues.

Has some calmodulin-like activity with respect to enzyme activation and growth regulation. Binds two calcium ions. The protein is Oncomodulin (Ocm) of Rattus norvegicus (Rat).